We begin with the raw amino-acid sequence, 489 residues long: Zinc finger protein 772 (489 aa).

The region spanning 27 to 98 (VNFEDVFVYF…DWVDMTLAVA (72 aa)) is the KRAB domain. 10 C2H2-type zinc fingers span residues 144–166 (YPCG…QETH), 172–194 (YMCV…QKQH), 266–288 (YKCS…QRVH), 294–316 (YECG…QRIH), 322–344 (YECG…QRVH), 350–372 (YKCS…ESIH), 378–400 (YECS…WSVH), 406–428 (YECI…QRVH), 434–456 (YVCS…HRIH), and 462–484 (YKCS…WKIH).

Belongs to the krueppel C2H2-type zinc-finger protein family.

Its subcellular location is the nucleus. Functionally, may be involved in transcriptional regulation. In Homo sapiens (Human), this protein is Zinc finger protein 772 (ZNF772).